The sequence spans 508 residues: Cytochrome P450 monooxygenase BipB (508 aa).

The chain crosses the membrane as a helical span at residues 11-31 (ELAWLLLGPLVLFYVFKLFIY). Heme is bound at residue C448.

It belongs to the cytochrome P450 family. It depends on heme as a cofactor.

It localises to the membrane. The protein operates within sesquiterpene biosynthesis. Its function is as follows. Cytochrome P450 monooxygenase; part of the minimal biosynthetic bip cluster that mediates the biosynthesis of bridged polycyclic sesquiterpenoids derived from sativene, isosativene, and longifolene. The sesquiterpene cyclase BipA acts as a versatile cyclase that converts farnesyl diphosphate (FPP) into (-)-sativene as the dominant product and (-)-isosativene and (-)-longifolene as minor ones. The cytochrome P450 monooxygenase BipB then hydroxylates different enantiomeric sesquiterpenes, such as (-)-longifolene and (+)-longifolene, at C-15 and C-14. The C-15- or both C-15- and C-14-hydroxylated products are further oxidized by unclustered oxidases, resulting in a structurally diverse array of sesquiterpenoids. The BipB-catalyzed hydroxylation at C-15 serves as an initiator for the oxidation by the unclustered oxidases. The protein is Cytochrome P450 monooxygenase BipB of Cochliobolus sativus (Common root rot and spot blotch fungus).